A 156-amino-acid chain; its full sequence is MSRRSVTKKRVVPPDAVYNNRLLSMTIRRVMKSGKKSLAARIVYDALDIIKERTGSDPIEVFETAIRNLTPLVEVKARRVGGATYQVPMEVRQGRGTALALRWLIGYARQRSGKSMAIKLANELMDAANETGGAIKKREDTHRMAEANKAFAHYRY.

It belongs to the universal ribosomal protein uS7 family. Part of the 30S ribosomal subunit. Contacts proteins S9 and S11.

Its function is as follows. One of the primary rRNA binding proteins, it binds directly to 16S rRNA where it nucleates assembly of the head domain of the 30S subunit. Is located at the subunit interface close to the decoding center, probably blocks exit of the E-site tRNA. This chain is Small ribosomal subunit protein uS7, found in Picosynechococcus sp. (strain ATCC 27264 / PCC 7002 / PR-6) (Agmenellum quadruplicatum).